The primary structure comprises 205 residues: Recombination protein RecR (205 aa).

Residues Cys59 to Cys74 form a C4-type zinc finger. One can recognise a Toprim domain in the interval Gly82 to Pro181.

This sequence belongs to the RecR family.

In terms of biological role, may play a role in DNA repair. It seems to be involved in an RecBC-independent recombinational process of DNA repair. It may act with RecF and RecO. This chain is Recombination protein RecR, found in Cyanothece sp. (strain PCC 7425 / ATCC 29141).